Here is a 257-residue protein sequence, read N- to C-terminus: Acetylglutamate kinase (257 aa).

Residues 43 to 44, Arg65, and Asn157 contribute to the substrate site; that span reads GG. Residues 180 to 185 and 208 to 210 each bind ATP; these read DISSIL and IIT.

The protein belongs to the acetylglutamate kinase family. ArgB subfamily. In terms of assembly, homodimer.

It localises to the cytoplasm. The catalysed reaction is N-acetyl-L-glutamate + ATP = N-acetyl-L-glutamyl 5-phosphate + ADP. The protein operates within amino-acid biosynthesis; L-arginine biosynthesis; N(2)-acetyl-L-ornithine from L-glutamate: step 2/4. Functionally, catalyzes the ATP-dependent phosphorylation of N-acetyl-L-glutamate. The chain is Acetylglutamate kinase from Buchnera aphidicola subsp. Acyrthosiphon pisum (strain 5A).